The following is a 156-amino-acid chain: Small ribosomal subunit protein uS7 (156 aa).

This sequence belongs to the universal ribosomal protein uS7 family. Part of the 30S ribosomal subunit. Contacts proteins S9 and S11.

Functionally, one of the primary rRNA binding proteins, it binds directly to 16S rRNA where it nucleates assembly of the head domain of the 30S subunit. Is located at the subunit interface close to the decoding center, probably blocks exit of the E-site tRNA. In Onion yellows phytoplasma (strain OY-M), this protein is Small ribosomal subunit protein uS7.